The following is a 298-amino-acid chain: 4-hydroxy-tetrahydrodipicolinate synthase (298 aa).

Residue T48 coordinates pyruvate. Y137 serves as the catalytic Proton donor/acceptor. The active-site Schiff-base intermediate with substrate is K166. Residue I207 participates in pyruvate binding.

The protein belongs to the DapA family. As to quaternary structure, homotetramer; dimer of dimers.

The protein localises to the cytoplasm. The catalysed reaction is L-aspartate 4-semialdehyde + pyruvate = (2S,4S)-4-hydroxy-2,3,4,5-tetrahydrodipicolinate + H2O + H(+). The protein operates within amino-acid biosynthesis; L-lysine biosynthesis via DAP pathway; (S)-tetrahydrodipicolinate from L-aspartate: step 3/4. In terms of biological role, catalyzes the condensation of (S)-aspartate-beta-semialdehyde [(S)-ASA] and pyruvate to 4-hydroxy-tetrahydrodipicolinate (HTPA). This Campylobacter jejuni subsp. jejuni serotype O:23/36 (strain 81-176) protein is 4-hydroxy-tetrahydrodipicolinate synthase.